We begin with the raw amino-acid sequence, 224 residues long: Probable Brix domain-containing ribosomal biogenesis protein (224 aa).

The region spanning 1–196 is the Brix domain; the sequence is MMLITTSHRP…IWIMEDGRRW (196 aa).

Its function is as follows. Probably involved in the biogenesis of the ribosome. In Pyrococcus abyssi (strain GE5 / Orsay), this protein is Probable Brix domain-containing ribosomal biogenesis protein.